Consider the following 315-residue polypeptide: tRNA pseudouridine synthase B (315 aa).

Asp54 (nucleophile) is an active-site residue.

It belongs to the pseudouridine synthase TruB family. Type 1 subfamily.

The catalysed reaction is uridine(55) in tRNA = pseudouridine(55) in tRNA. Functionally, responsible for synthesis of pseudouridine from uracil-55 in the psi GC loop of transfer RNAs. This Agrobacterium fabrum (strain C58 / ATCC 33970) (Agrobacterium tumefaciens (strain C58)) protein is tRNA pseudouridine synthase B.